We begin with the raw amino-acid sequence, 135 residues long: MVLEILARVIKVQLPAYLKRLPVPDSIAGFIRLTVSEWLRLLPFLGVLALLGYLAIRPFLPKKKQQKDSLINLKIQKENPKVVNEIDIEDLRIAKVAYCRCWRSKTFPVCDGSHNKHNELTGDNVGPLILKKKEV.

Residues 1 to 37 (MVLEILARVIKVQLPAYLKRLPVPDSIAGFIRLTVSE) lie on the Lumenal side of the membrane. A helical membrane pass occupies residues 38–60 (WLRLLPFLGVLALLGYLAIRPFL). Over 61-135 (PKKKQQKDSL…GPLILKKKEV (75 aa)) the chain is Cytoplasmic. Cys99, Cys101, Cys110, and His114 together coordinate [2Fe-2S] cluster.

Belongs to the CISD protein family. CISD2 subfamily. In terms of assembly, homodimer. It depends on [2Fe-2S] cluster as a cofactor.

It is found in the endoplasmic reticulum membrane. The protein resides in the mitochondrion outer membrane. In terms of biological role, regulator of autophagy that contributes to antagonize becn1-mediated cellular autophagy at the endoplasmic reticulum. Participates in the interaction of bcl2 with becn1 and is required for bcl2-mediated depression of endoplasmic reticulum Ca(2+) stores during autophagy. This chain is CDGSH iron-sulfur domain-containing protein 2 (cisd2), found in Aquarana catesbeiana (American bullfrog).